An 87-amino-acid chain; its full sequence is HssA/B-like protein 18 (87 aa).

This sequence belongs to the hssA/B family.

In Dictyostelium discoideum (Social amoeba), this protein is HssA/B-like protein 18 (hssl18).